The sequence spans 349 residues: Beta-hexosaminidase (349 aa).

Substrate contacts are provided by residues Asp64, Arg72, Arg138, and 168–169 (KH). Catalysis depends on His181, which acts as the Proton donor/acceptor. The Nucleophile role is filled by Asp252.

This sequence belongs to the glycosyl hydrolase 3 family. NagZ subfamily.

The protein localises to the cytoplasm. The enzyme catalyses Hydrolysis of terminal non-reducing N-acetyl-D-hexosamine residues in N-acetyl-beta-D-hexosaminides.. It participates in cell wall biogenesis; peptidoglycan recycling. Its function is as follows. Plays a role in peptidoglycan recycling by cleaving the terminal beta-1,4-linked N-acetylglucosamine (GlcNAc) from peptide-linked peptidoglycan fragments, giving rise to free GlcNAc, anhydro-N-acetylmuramic acid and anhydro-N-acetylmuramic acid-linked peptides. The sequence is that of Beta-hexosaminidase from Nitrosospira multiformis (strain ATCC 25196 / NCIMB 11849 / C 71).